A 279-amino-acid chain; its full sequence is MDPQNKSPKPQVKSTRLVVKKQPAGVVFPKLSIPVNDFEKTVTLTRAQKKEAKLLKKAQRKANKLNNKQDSTFFNSASGETNNTILPPGVKNQADNKTNRFSKFISFFTSSKNKQPDEITERLVDDPTVKNRFSAFNKKLIWVLKDKKLRARAWKIVGYTNLVIVAFFAGLLAVMNKFITLSSVEYPAIALQLPINNALWGISIFVISIVTLPFWTMFILFLMGVKDVRTSRSIHYFIWIVLIINVVLLLVSCLLMIAAYAHLDGYNIWRNLESLNPNN.

The tract at residues 60–92 (RKANKLNNKQDSTFFNSASGETNNTILPPGVKN) is disordered. Positions 70–85 (DSTFFNSASGETNNTI) are enriched in polar residues. 3 consecutive transmembrane segments (helical) span residues 156-176 (IVGYTNLVIVAFFAGLLAVMN), 202-222 (ISIFVISIVTLPFWTMFILFL), and 237-257 (FIWIVLIINVVLLLVSCLLMI).

The protein resides in the cell membrane. This is an uncharacterized protein from Mycoplasma genitalium (strain ATCC 33530 / DSM 19775 / NCTC 10195 / G37) (Mycoplasmoides genitalium).